The following is a 123-amino-acid chain: Large ribosomal subunit protein bL12 (123 aa).

It belongs to the bacterial ribosomal protein bL12 family. In terms of assembly, homodimer. Part of the ribosomal stalk of the 50S ribosomal subunit. Forms a multimeric L10(L12)X complex, where L10 forms an elongated spine to which 2 to 4 L12 dimers bind in a sequential fashion. Binds GTP-bound translation factors.

Forms part of the ribosomal stalk which helps the ribosome interact with GTP-bound translation factors. Is thus essential for accurate translation. The polypeptide is Large ribosomal subunit protein bL12 (Parvibaculum lavamentivorans (strain DS-1 / DSM 13023 / NCIMB 13966)).